The sequence spans 289 residues: E3 ubiquitin-protein ligase MARCHF1 (289 aa).

The tract at residues 1–66 (MLGWCEAIAR…SPTTGTAPRS (66 aa)) is responsible for low stability. A disordered region spans residues 13–69 (HRIPNNTRTPEISGDLADASQTSTLNEKSPGRSASRSSNISKASSPTTGTAPRSQSR). Low complexity predominate over residues 43–58 (GRSASRSSNISKASSP). Polar residues predominate over residues 59 to 69 (TTGTAPRSQSR). The RING-CH-type zinc-finger motif lies at 72 to 133 (VCPSTQDICR…ELCKYDFIME (62 aa)). Zn(2+) contacts are provided by Cys80, Cys83, Cys97, Cys99, His107, Cys110, Cys123, and Cys126. Helical transmembrane passes span 155–175 (IFCSVTFHVIAITCVVWSLYV) and 197–217 (FWTKLVVVAIGFTGGLVFMYV). Positions 222–279 (YVQLWRRLKAYNRVIFVQNCPDTAKKLEKNFSCNVNTDIKDAVVVPVPQTGANSLPSA) are responsible for down-regulation of CD86 and MHC class II cell surface expression.

Interacts with CD83; this interaction antagonizes MARCHF1-mediated MHC II and CD86 down-regulation. Post-translationally, ubiquitinated via ubiquitin-conjugating enzyme E2 D1/UBE2D1 independently of lysines, leading to proteolytic degradation. In terms of processing, has a short half-life. Instability/short half-life permits rapid changes that allow efficient induction of antigen presentation once antigen presenting cells, APCs, receive maturation signals. Small changes in protein levels significantly alter the cell surface display of MHC class II proteins. Expressed in antigen presenting cells, APCs, located in lymph nodes and spleen. Also expressed in lung. Expression is high in follicular B-cells, moderate in dendritic cells and low in splenic T-cells.

It is found in the golgi apparatus. The protein localises to the trans-Golgi network membrane. The protein resides in the lysosome membrane. Its subcellular location is the cytoplasmic vesicle membrane. It localises to the late endosome membrane. It is found in the early endosome membrane. The protein localises to the cell membrane. The enzyme catalyses S-ubiquitinyl-[E2 ubiquitin-conjugating enzyme]-L-cysteine + [acceptor protein]-L-lysine = [E2 ubiquitin-conjugating enzyme]-L-cysteine + N(6)-ubiquitinyl-[acceptor protein]-L-lysine.. It participates in protein modification; protein ubiquitination. Functionally, E3 ubiquitin-protein ligase that mediates ubiquitination of TFRC, CD86, FAS and MHC class II proteins, such as HLA-DR alpha and beta, and promotes their subsequent endocytosis and sorting to lysosomes via multivesicular bodies. By constitutively ubiquitinating MHC class II proteins in immature dendritic cells, down-regulates their cell surface localization thus sequestering them in the intracellular endosomal system. Also regulates insulin sensitivity by controlling surface expression of the insulin receptor subunit beta/INSR by direct ubiquitination and degradation. In terms of biological role, (Microbial infection) Plays a role in iron metabolism by regulating the levels of the transferrin receptor TFRC during human cytomegalovirus infection, subsequently contributing to a proviral effect. The polypeptide is E3 ubiquitin-protein ligase MARCHF1 (Homo sapiens (Human)).